The following is a 180-amino-acid chain: uncharacterized protein (180 aa).

The Nudix hydrolase domain maps to 35-163 (LRHRATYIVV…TPDSLKALAL (129 aa)). Positions 72–94 (GGVVQADEQLLESARREAEEELG) match the Nudix box motif. Residues Glu88 and Glu92 each coordinate Mg(2+).

This sequence belongs to the Nudix hydrolase family. The cofactor is Mg(2+).

This is an uncharacterized protein from Escherichia coli O157:H7.